A 102-amino-acid chain; its full sequence is Noncompact myelin-associated protein (102 aa).

The Extracellular segment spans residues 1 to 30 (MTTATPLGDTTFFSLNMTTRGEDFLYKSSG). The chain crosses the membrane as a helical span at residues 31-51 (AIVAAVVVVVIIIFTVVLILL). The Cytoplasmic segment spans residues 52–102 (KMYNRKMRTRRELEPKGPKPTAPSAVGPNSNGSQHPATVTFSPVDVQVETR). Positions 60–102 (TRRELEPKGPKPTAPSAVGPNSNGSQHPATVTFSPVDVQVETR) are disordered. Residues 78 to 92 (GPNSNGSQHPATVTF) show a composition bias toward polar residues.

In terms of processing, glycosylated.

It localises to the cell membrane. Functionally, plays a role in myelin formation. The sequence is that of Noncompact myelin-associated protein (NCMAP) from Homo sapiens (Human).